Consider the following 809-residue polypeptide: Ribosome biogenesis protein ERB1 (809 aa).

Residues 1–107 (MSKSSKVGMT…SDTRSITDAI (107 aa)) form a disordered region. 2 stretches are compositionally biased toward acidic residues: residues 30–70 (AEVD…EDSD) and 77–97 (LGEE…EPQE). A required for interaction with NOP7 region spans residues 267 to 383 (RFVPSKHEAK…LRKVPGYQES (117 aa)). Residues 383–419 (SVRERFERCLDLYLAPRVRHNKLNIDPESLIPELPSP) are required for interaction with YTM1. WD repeat units lie at residues 435–474 (GHTD…QVFN) and 483–523 (NDED…FDIE). The segment at 545-569 (EEKFKNDEGNEDEDDEDDSATSTAV) is disordered. A compositionally biased stretch (acidic residues) spans 553–563 (GNEDEDDEDDS). WD repeat units follow at residues 593–635 (QCRK…SQSP), 638–676 (KSKG…LVKK), 679–718 (PGVR…TPYK), 722–762 (YHEK…DLMT), and 778–809 (VNSI…LWTT).

It belongs to the WD repeat BOP1/ERB1 family. In terms of assembly, component of the NOP7 complex, composed of ERB1, NOP7 and YTM1. The complex is held together by ERB1, which interacts with NOP7 via its N-terminal domain and with YTM1 via a high-affinity interaction between the seven-bladed beta-propeller domains of the 2 proteins. The NOP7 complex associates with the 66S pre-ribosome.

The protein localises to the nucleus. It localises to the nucleolus. Its subcellular location is the nucleoplasm. Component of the NOP7 complex, which is required for maturation of the 25S and 5.8S ribosomal RNAs and formation of the 60S ribosome. In Scheffersomyces stipitis (strain ATCC 58785 / CBS 6054 / NBRC 10063 / NRRL Y-11545) (Yeast), this protein is Ribosome biogenesis protein ERB1.